Consider the following 462-residue polypeptide: tRNA(Ile)-lysidine synthase (462 aa).

Residue 27–32 (SGGPDS) coordinates ATP.

It belongs to the tRNA(Ile)-lysidine synthase family.

It localises to the cytoplasm. The catalysed reaction is cytidine(34) in tRNA(Ile2) + L-lysine + ATP = lysidine(34) in tRNA(Ile2) + AMP + diphosphate + H(+). Ligates lysine onto the cytidine present at position 34 of the AUA codon-specific tRNA(Ile) that contains the anticodon CAU, in an ATP-dependent manner. Cytidine is converted to lysidine, thus changing the amino acid specificity of the tRNA from methionine to isoleucine. This Clostridioides difficile (strain 630) (Peptoclostridium difficile) protein is tRNA(Ile)-lysidine synthase.